The following is a 225-amino-acid chain: Glutathione S-transferase U3 (225 aa).

The region spanning glutamate 6 to proline 86 is the GST N-terminal domain. Residues serine 16–proline 17, valine 43–lysine 44, lysine 57–valine 58, and glutamate 70–serine 71 contribute to the glutathione site. The region spanning serine 91 to isoleucine 218 is the GST C-terminal domain. At threonine 152 the chain carries Phosphothreonine.

This sequence belongs to the GST superfamily. Tau family.

It localises to the cytoplasm. Its subcellular location is the cytosol. It catalyses the reaction RX + glutathione = an S-substituted glutathione + a halide anion + H(+). Functionally, may be involved in the conjugation of reduced glutathione to a wide number of exogenous and endogenous hydrophobic electrophiles and have a detoxification role against certain herbicides. The sequence is that of Glutathione S-transferase U3 (GSTU3) from Arabidopsis thaliana (Mouse-ear cress).